Consider the following 212-residue polypeptide: Cytidylate kinase (212 aa).

7-15 (GPAASGKGT) contributes to the ATP binding site.

Belongs to the cytidylate kinase family. Type 1 subfamily.

The protein resides in the cytoplasm. The enzyme catalyses CMP + ATP = CDP + ADP. It carries out the reaction dCMP + ATP = dCDP + ADP. This chain is Cytidylate kinase, found in Rhodopseudomonas palustris (strain HaA2).